Reading from the N-terminus, the 591-residue chain is 2-succinyl-5-enolpyruvyl-6-hydroxy-3-cyclohexene-1-carboxylate synthase (591 aa).

Belongs to the TPP enzyme family. MenD subfamily. Homodimer. Mg(2+) is required as a cofactor. The cofactor is Mn(2+). It depends on thiamine diphosphate as a cofactor.

The catalysed reaction is isochorismate + 2-oxoglutarate + H(+) = 5-enolpyruvoyl-6-hydroxy-2-succinyl-cyclohex-3-ene-1-carboxylate + CO2. It participates in quinol/quinone metabolism; 1,4-dihydroxy-2-naphthoate biosynthesis; 1,4-dihydroxy-2-naphthoate from chorismate: step 2/7. It functions in the pathway cofactor biosynthesis; phylloquinone biosynthesis. In terms of biological role, catalyzes the thiamine diphosphate-dependent decarboxylation of 2-oxoglutarate and the subsequent addition of the resulting succinic semialdehyde-thiamine pyrophosphate anion to isochorismate to yield 2-succinyl-5-enolpyruvyl-6-hydroxy-3-cyclohexene-1-carboxylate (SEPHCHC). The polypeptide is 2-succinyl-5-enolpyruvyl-6-hydroxy-3-cyclohexene-1-carboxylate synthase (Rippkaea orientalis (strain PCC 8801 / RF-1) (Cyanothece sp. (strain PCC 8801))).